A 699-amino-acid polypeptide reads, in one-letter code: Elongation factor G (699 aa).

The region spanning 8-283 (EHIRNIGICA…AVVDFLPSPI (276 aa)) is the tr-type G domain. Residues 17–24 (AHIDAGKT), 81–85 (DTPGH), and 135–138 (NKMD) contribute to the GTP site.

The protein belongs to the TRAFAC class translation factor GTPase superfamily. Classic translation factor GTPase family. EF-G/EF-2 subfamily.

Its subcellular location is the cytoplasm. In terms of biological role, catalyzes the GTP-dependent ribosomal translocation step during translation elongation. During this step, the ribosome changes from the pre-translocational (PRE) to the post-translocational (POST) state as the newly formed A-site-bound peptidyl-tRNA and P-site-bound deacylated tRNA move to the P and E sites, respectively. Catalyzes the coordinated movement of the two tRNA molecules, the mRNA and conformational changes in the ribosome. This chain is Elongation factor G, found in Rickettsia rickettsii (strain Iowa).